Consider the following 185-residue polypeptide: MRRKVRRLTLAVSALVALFPAVAGCSDSGDNKPGATIPSTPANAEGRHGPFFPQCGGVSDQTVTELTRVTGLVNTAKNSVGCQWLAGGGILGPHFSFSWYRGSPIGRERKTEELSRASVEDINIDGHSGFIAIGNEPSLGDSLCEVGIQFSDDFIEWSVSFSQKPFPPPCDIAKELTRQSIANSK.

The first 24 residues, 1 to 24 (MRRKVRRLTLAVSALVALFPAVAG), serve as a signal peptide directing secretion. Cysteine 25 carries N-palmitoyl cysteine lipidation. Cysteine 25 is lipidated: S-diacylglycerol cysteine. The segment at 26–50 (SDSGDNKPGATIPSTPANAEGRHGP) is disordered.

It is found in the cell membrane. The chain is Putative lipoprotein LprB (lprB) from Mycobacterium bovis (strain ATCC BAA-935 / AF2122/97).